A 192-amino-acid polypeptide reads, in one-letter code: Adenylate kinase (192 aa).

An ATP-binding site is contributed by 10–15 (GAGKGT). The NMP stretch occupies residues 30–59 (STGDMLREVIRRETEIGKKAKAMINAGTLV). Residues Thr31, Arg36, 57–59 (TLV), 85–88 (GYPR), and Gln92 contribute to the AMP site. The interval 126–142 (KRVQETIIAGGQVRSDD) is LID. Residue Arg127 coordinates ATP. The AMP site is built by Arg139 and Arg150. Ile178 contributes to the ATP binding site.

Belongs to the adenylate kinase family. Monomer.

Its subcellular location is the cytoplasm. It catalyses the reaction AMP + ATP = 2 ADP. The protein operates within purine metabolism; AMP biosynthesis via salvage pathway; AMP from ADP: step 1/1. Functionally, catalyzes the reversible transfer of the terminal phosphate group between ATP and AMP. Plays an important role in cellular energy homeostasis and in adenine nucleotide metabolism. The polypeptide is Adenylate kinase (Bartonella henselae (strain ATCC 49882 / DSM 28221 / CCUG 30454 / Houston 1) (Rochalimaea henselae)).